A 243-amino-acid polypeptide reads, in one-letter code: Carboxy-S-adenosyl-L-methionine synthase (243 aa).

Residues tyrosine 40, glycine 65–serine 67, aspartate 90–asparagine 91, aspartate 118–isoleucine 119, asparagine 133, and arginine 200 each bind S-adenosyl-L-methionine.

Belongs to the class I-like SAM-binding methyltransferase superfamily. Cx-SAM synthase family. In terms of assembly, homodimer.

It catalyses the reaction prephenate + S-adenosyl-L-methionine = carboxy-S-adenosyl-L-methionine + 3-phenylpyruvate + H2O. Its function is as follows. Catalyzes the conversion of S-adenosyl-L-methionine (SAM) to carboxy-S-adenosyl-L-methionine (Cx-SAM). The sequence is that of Carboxy-S-adenosyl-L-methionine synthase from Shewanella sediminis (strain HAW-EB3).